The chain runs to 62 residues: Photosystem II reaction center protein Z (62 aa).

2 helical membrane passes run 8–28 (AVFA…VVLA) and 41–61 (FSGA…NSFI).

Belongs to the PsbZ family. PSII is composed of 1 copy each of membrane proteins PsbA, PsbB, PsbC, PsbD, PsbE, PsbF, PsbH, PsbI, PsbJ, PsbK, PsbL, PsbM, PsbT, PsbY, PsbZ, Psb30/Ycf12, at least 3 peripheral proteins of the oxygen-evolving complex and a large number of cofactors. It forms dimeric complexes.

Its subcellular location is the plastid. It localises to the chloroplast thylakoid membrane. May control the interaction of photosystem II (PSII) cores with the light-harvesting antenna, regulates electron flow through the 2 photosystem reaction centers. PSII is a light-driven water plastoquinone oxidoreductase, using light energy to abstract electrons from H(2)O, generating a proton gradient subsequently used for ATP formation. In Anthoceros angustus (Hornwort), this protein is Photosystem II reaction center protein Z.